A 313-amino-acid chain; its full sequence is Protein FixB (313 aa).

Residue 255 to 283 (LYLAVGISGQIQHMVGANASQTIFAINKD) participates in FAD binding.

Belongs to the ETF alpha-subunit/FixB family. Heterodimer of FixA and FixB.

It participates in amine and polyamine metabolism; carnitine metabolism. Its function is as follows. Required for anaerobic carnitine reduction. May bring reductant to CaiA. In Escherichia coli O1:K1 / APEC, this protein is Protein FixB.